A 54-amino-acid polypeptide reads, in one-letter code: uncharacterized protein (54 aa).

Positions 1 to 13 (MLLCFHMCQRIMW) are cleaved as a signal peptide.

It localises to the secreted. This is an uncharacterized protein from Saccharomyces cerevisiae (strain ATCC 204508 / S288c) (Baker's yeast).